A 350-amino-acid chain; its full sequence is Transmembrane protein 185B (350 aa).

Transmembrane regions (helical) follow at residues 16-36, 41-61, 81-101, 111-131, 168-188, 211-231, and 240-260; these read LIYA…DGII, WAVF…ASVG, FKAM…EILV, FWLL…AACV, WLVV…VVLY, VTMA…EVLL, and TFSY…LMAT.

The protein belongs to the TMEM185 family.

Its subcellular location is the membrane. The protein is Transmembrane protein 185B (Tmem185b) of Mus musculus (Mouse).